A 441-amino-acid chain; its full sequence is 5-hydroxytryptamine receptor 3B (441 aa).

The N-terminal stretch at 1–21 is a signal peptide; it reads MLSSVMAPLWACILVAAGILA. Over 22–238 the chain is Extracellular; it reads TDTHHPQDSA…IQFNVVMRRH (217 aa). 5 N-linked (GlcNAc...) asparagine glycosylation sites follow: asparagine 52, asparagine 96, asparagine 138, asparagine 168, and asparagine 203. A disulfide bridge links cysteine 155 with cysteine 169. The chain crosses the membrane as a helical span at residues 239 to 259; the sequence is PLVYVVSLLIPSIFLMLVDLG. Residues 260-268 lie on the Cytoplasmic side of the membrane; sequence SFYLPPNCR. The helical transmembrane segment at 269 to 286 threads the bilayer; that stretch reads ARIVFKTSVLVGYTVFRV. N-linked (GlcNAc...) asparagine glycosylation occurs at asparagine 287. Topologically, residues 287–303 are extracellular; it reads NMSNQVPRSVGSTPLIG. Residues 304-324 form a helical membrane-spanning segment; that stretch reads HFFTICMAFLVLSLAKSIVLV. The Cytoplasmic portion of the chain corresponds to 325–414; that stretch reads KFLHDEQRGG…WLVLLSRFDR (90 aa). An HA-stretch; determines single-channel conductance in 5-HT3 receptors region spans residues 381–413; it reads VWSQLQSISNYLQTQDQTDQQEAEWLVLLSRFD. The helical transmembrane segment at 415 to 435 threads the bilayer; sequence LLFQSYLFMLGIYTITLCSLW. At 436–441 the chain is on the extracellular side; the sequence is ALWGGV.

It belongs to the ligand-gated ion channel (TC 1.A.9) family. 5-hydroxytryptamine receptor (TC 1.A.9.2) subfamily. HTR3B sub-subfamily. As to quaternary structure, forms homopentameric as well as heteropentameric serotonin-activated cation-selective channel complexes with HTR3A. The homomeric complex is not functional. Heteropentameric complexes display properties which resemble that of neuronal serotonin-activated channels in vivo. N-glycosylation required for membrane localization. In terms of tissue distribution, expressed in the brain cortex, in the caudate nucleus, the hippocampus, the thalamus and the amygdala. Detected in the kidney and testis as well as in monocytes of the spleen, small and large intestine, uterus, prostate, ovary and placenta.

It localises to the postsynaptic cell membrane. The protein localises to the cell membrane. It carries out the reaction Na(+)(in) = Na(+)(out). It catalyses the reaction K(+)(in) = K(+)(out). The catalysed reaction is Ca(2+)(in) = Ca(2+)(out). Functionally, forms serotonin (5-hydroxytryptamine/5-HT3)-activated cation-selective channel complexes, which when activated cause fast, depolarizing responses in neurons. The protein is 5-hydroxytryptamine receptor 3B of Homo sapiens (Human).